The primary structure comprises 30 residues: Snaclec coagulation factor IX/factor X-binding protein subunit A (30 aa).

The region spanning 1–30 (DCPSDWSPYEGHCYKHFIKWMNNEDAERFC) is the C-type lectin domain. The cysteines at positions 2 and 13 are disulfide-linked.

It belongs to the snaclec family. As to quaternary structure, heterodimer of subunits A and B; disulfide-linked. Expressed by the venom gland.

It localises to the secreted. Functionally, anticoagulant protein which binds to the gamma-carboxyglutamic acid-domain regions of factors IX (F9) and factor X (F10) in the presence of calcium with a 1 to 1 stoichiometry. This Bothrops jararaca (Jararaca) protein is Snaclec coagulation factor IX/factor X-binding protein subunit A.